The following is a 406-amino-acid chain: Arginine biosynthesis bifunctional protein ArgJ (406 aa).

The substrate site is built by Thr-152, Lys-179, Thr-190, Glu-277, Asn-401, and Ser-406. Thr-190 serves as the catalytic Nucleophile.

Belongs to the ArgJ family. In terms of assembly, heterotetramer of two alpha and two beta chains.

It is found in the cytoplasm. It catalyses the reaction N(2)-acetyl-L-ornithine + L-glutamate = N-acetyl-L-glutamate + L-ornithine. It carries out the reaction L-glutamate + acetyl-CoA = N-acetyl-L-glutamate + CoA + H(+). Its pathway is amino-acid biosynthesis; L-arginine biosynthesis; L-ornithine and N-acetyl-L-glutamate from L-glutamate and N(2)-acetyl-L-ornithine (cyclic): step 1/1. The protein operates within amino-acid biosynthesis; L-arginine biosynthesis; N(2)-acetyl-L-ornithine from L-glutamate: step 1/4. In terms of biological role, catalyzes two activities which are involved in the cyclic version of arginine biosynthesis: the synthesis of N-acetylglutamate from glutamate and acetyl-CoA as the acetyl donor, and of ornithine by transacetylation between N(2)-acetylornithine and glutamate. This is Arginine biosynthesis bifunctional protein ArgJ from Neisseria meningitidis serogroup A / serotype 4A (strain DSM 15465 / Z2491).